Reading from the N-terminus, the 239-residue chain is 1-(5-phosphoribosyl)-5-[(5-phosphoribosylamino)methylideneamino] imidazole-4-carboxamide isomerase (239 aa).

D7 (proton acceptor) is an active-site residue. Catalysis depends on D129, which acts as the Proton donor.

It belongs to the HisA/HisF family.

It is found in the cytoplasm. It catalyses the reaction 1-(5-phospho-beta-D-ribosyl)-5-[(5-phospho-beta-D-ribosylamino)methylideneamino]imidazole-4-carboxamide = 5-[(5-phospho-1-deoxy-D-ribulos-1-ylimino)methylamino]-1-(5-phospho-beta-D-ribosyl)imidazole-4-carboxamide. Its pathway is amino-acid biosynthesis; L-histidine biosynthesis; L-histidine from 5-phospho-alpha-D-ribose 1-diphosphate: step 4/9. The sequence is that of 1-(5-phosphoribosyl)-5-[(5-phosphoribosylamino)methylideneamino] imidazole-4-carboxamide isomerase from Lactiplantibacillus plantarum (strain ATCC BAA-793 / NCIMB 8826 / WCFS1) (Lactobacillus plantarum).